The primary structure comprises 165 residues: Thiol peroxidase (165 aa).

Residues 18-165 enclose the Thioredoxin domain; sequence PQVGDNLAEF…DYDAALAALN (148 aa). Cysteine 60 (cysteine sulfenic acid (-SOH) intermediate) is an active-site residue. Cysteine 60 and cysteine 94 are disulfide-bonded.

The protein belongs to the peroxiredoxin family. Tpx subfamily. As to quaternary structure, homodimer.

It carries out the reaction a hydroperoxide + [thioredoxin]-dithiol = an alcohol + [thioredoxin]-disulfide + H2O. Functionally, thiol-specific peroxidase that catalyzes the reduction of hydrogen peroxide and organic hydroperoxides to water and alcohols, respectively. Plays a role in cell protection against oxidative stress by detoxifying peroxides. The chain is Thiol peroxidase from Corynebacterium glutamicum (strain ATCC 13032 / DSM 20300 / JCM 1318 / BCRC 11384 / CCUG 27702 / LMG 3730 / NBRC 12168 / NCIMB 10025 / NRRL B-2784 / 534).